The chain runs to 471 residues: tRNA(Ile)-lysidine synthase (471 aa).

27–32 provides a ligand contact to ATP; it reads SGGPDS.

Belongs to the tRNA(Ile)-lysidine synthase family.

Its subcellular location is the cytoplasm. The catalysed reaction is cytidine(34) in tRNA(Ile2) + L-lysine + ATP = lysidine(34) in tRNA(Ile2) + AMP + diphosphate + H(+). Its function is as follows. Ligates lysine onto the cytidine present at position 34 of the AUA codon-specific tRNA(Ile) that contains the anticodon CAU, in an ATP-dependent manner. Cytidine is converted to lysidine, thus changing the amino acid specificity of the tRNA from methionine to isoleucine. This Dehalococcoides mccartyi (strain CBDB1) protein is tRNA(Ile)-lysidine synthase.